The sequence spans 140 residues: 3-hydroxyacyl-[acyl-carrier-protein] dehydratase FabZ (140 aa).

Histidine 48 is a catalytic residue.

The protein belongs to the thioester dehydratase family. FabZ subfamily.

The protein localises to the cytoplasm. The catalysed reaction is a (3R)-hydroxyacyl-[ACP] = a (2E)-enoyl-[ACP] + H2O. In terms of biological role, involved in unsaturated fatty acids biosynthesis. Catalyzes the dehydration of short chain beta-hydroxyacyl-ACPs and long chain saturated and unsaturated beta-hydroxyacyl-ACPs. In Latilactobacillus sakei subsp. sakei (strain 23K) (Lactobacillus sakei subsp. sakei), this protein is 3-hydroxyacyl-[acyl-carrier-protein] dehydratase FabZ.